We begin with the raw amino-acid sequence, 218 residues long: Probable transaldolase 2 (218 aa).

Lysine 83 functions as the Schiff-base intermediate with substrate in the catalytic mechanism.

Belongs to the transaldolase family. Type 3B subfamily.

It is found in the cytoplasm. It catalyses the reaction D-sedoheptulose 7-phosphate + D-glyceraldehyde 3-phosphate = D-erythrose 4-phosphate + beta-D-fructose 6-phosphate. It participates in carbohydrate degradation; pentose phosphate pathway; D-glyceraldehyde 3-phosphate and beta-D-fructose 6-phosphate from D-ribose 5-phosphate and D-xylulose 5-phosphate (non-oxidative stage): step 2/3. In terms of biological role, transaldolase is important for the balance of metabolites in the pentose-phosphate pathway. This chain is Probable transaldolase 2, found in Listeria innocua serovar 6a (strain ATCC BAA-680 / CLIP 11262).